Consider the following 376-residue polypeptide: MKALLALEDGFILEGQSINGHCESSGEVIFNTGMTGYQEILTDPSYYGQMVCMTWPLIGNYGINKEDMESEKIHVSALIVKECCRNPSNWRSETSLPKFLQEYNIAGIEGIDTRALTRHIRINGAMRGIISTSITDPNDLILRVKKVPSMEGQNYVTKVAPNSPWVLYGQCVVPADIKEDGSFLWKQNKIPLIVYDYGIKWNIIRLLEGAGFDPLMVPPLFSLEQVKASGAKAIFLSNGPGDPGTLIDEIQIIRELMEYYPIAGICLGHQLLGHAVGGTTRKLTFGHHGSNHPIKNLATGHIEISSQNHGFCVNFESNNDIEVTHINLNDNTLEGFIHKTKPILAVQHHPEASPGPMDSQYFFTRFKEVVLLKLGC.

The interval Met-1 to Gln-187 is CPSase. L-glutamine is bound by residues Ser-45, Gly-239, and Gly-241. Residues Lys-189 to Cys-376 form the Glutamine amidotransferase type-1 domain. The Nucleophile role is filled by Cys-266. Residues Leu-267, Gln-270, Asn-308, Gly-310, and Phe-311 each contribute to the L-glutamine site. Residues His-349 and Glu-351 contribute to the active site.

It belongs to the CarA family. In terms of assembly, composed of two chains; the small (or glutamine) chain promotes the hydrolysis of glutamine to ammonia, which is used by the large (or ammonia) chain to synthesize carbamoyl phosphate. Tetramer of heterodimers (alpha,beta)4.

It carries out the reaction hydrogencarbonate + L-glutamine + 2 ATP + H2O = carbamoyl phosphate + L-glutamate + 2 ADP + phosphate + 2 H(+). It catalyses the reaction L-glutamine + H2O = L-glutamate + NH4(+). Its pathway is amino-acid biosynthesis; L-arginine biosynthesis; carbamoyl phosphate from bicarbonate: step 1/1. It participates in pyrimidine metabolism; UMP biosynthesis via de novo pathway; (S)-dihydroorotate from bicarbonate: step 1/3. Its function is as follows. Small subunit of the glutamine-dependent carbamoyl phosphate synthetase (CPSase). CPSase catalyzes the formation of carbamoyl phosphate from the ammonia moiety of glutamine, carbonate, and phosphate donated by ATP, constituting the first step of 2 biosynthetic pathways, one leading to arginine and/or urea and the other to pyrimidine nucleotides. The small subunit (glutamine amidotransferase) binds and cleaves glutamine to supply the large subunit with the substrate ammonia. This Lawsonia intracellularis (strain PHE/MN1-00) protein is Carbamoyl phosphate synthase small chain.